The chain runs to 89 residues: Small ribosomal subunit protein uS15 (89 aa).

Belongs to the universal ribosomal protein uS15 family. In terms of assembly, part of the 30S ribosomal subunit. Forms a bridge to the 50S subunit in the 70S ribosome, contacting the 23S rRNA.

One of the primary rRNA binding proteins, it binds directly to 16S rRNA where it helps nucleate assembly of the platform of the 30S subunit by binding and bridging several RNA helices of the 16S rRNA. Functionally, forms an intersubunit bridge (bridge B4) with the 23S rRNA of the 50S subunit in the ribosome. The protein is Small ribosomal subunit protein uS15 of Blochmanniella pennsylvanica (strain BPEN).